A 764-amino-acid chain; its full sequence is 5-methyltetrahydropteroyltriglutamate--homocysteine methyltransferase (764 aa).

Residues 16–19 and Lys115 each bind 5-methyltetrahydropteroyltri-L-glutamate; that span reads RELK. L-homocysteine contacts are provided by residues 435–437 and Glu488; that span reads IGS. L-methionine contacts are provided by residues 435–437 and Glu488; that span reads IGS. 5-methyltetrahydropteroyltri-L-glutamate is bound by residues 519–520 and Trp565; that span reads RC. Asp603 is an L-homocysteine binding site. Asp603 contacts L-methionine. Glu609 contributes to the 5-methyltetrahydropteroyltri-L-glutamate binding site. Residues His645, Cys647, and Glu669 each contribute to the Zn(2+) site. The active-site Proton donor is the His698. Residue Cys730 participates in Zn(2+) binding.

Belongs to the vitamin-B12 independent methionine synthase family. Zn(2+) is required as a cofactor.

It catalyses the reaction 5-methyltetrahydropteroyltri-L-glutamate + L-homocysteine = tetrahydropteroyltri-L-glutamate + L-methionine. It participates in amino-acid biosynthesis; L-methionine biosynthesis via de novo pathway; L-methionine from L-homocysteine (MetE route): step 1/1. Functionally, catalyzes the transfer of a methyl group from 5-methyltetrahydrofolate to homocysteine resulting in methionine formation. This Burkholderia pseudomallei (strain K96243) protein is 5-methyltetrahydropteroyltriglutamate--homocysteine methyltransferase.